The sequence spans 234 residues: Leucyl/phenylalanyl-tRNA--protein transferase (234 aa).

This sequence belongs to the L/F-transferase family.

The protein localises to the cytoplasm. It carries out the reaction N-terminal L-lysyl-[protein] + L-leucyl-tRNA(Leu) = N-terminal L-leucyl-L-lysyl-[protein] + tRNA(Leu) + H(+). The enzyme catalyses N-terminal L-arginyl-[protein] + L-leucyl-tRNA(Leu) = N-terminal L-leucyl-L-arginyl-[protein] + tRNA(Leu) + H(+). The catalysed reaction is L-phenylalanyl-tRNA(Phe) + an N-terminal L-alpha-aminoacyl-[protein] = an N-terminal L-phenylalanyl-L-alpha-aminoacyl-[protein] + tRNA(Phe). Functions in the N-end rule pathway of protein degradation where it conjugates Leu, Phe and, less efficiently, Met from aminoacyl-tRNAs to the N-termini of proteins containing an N-terminal arginine or lysine. The protein is Leucyl/phenylalanyl-tRNA--protein transferase of Escherichia coli O157:H7 (strain EC4115 / EHEC).